A 306-amino-acid chain; its full sequence is tRNA dimethylallyltransferase (306 aa).

14-21 (GPTAAGKS) serves as a coordination point for ATP. 16–21 (TAAGKS) provides a ligand contact to substrate. Residues 39–42 (DSRL) are interaction with substrate tRNA.

The protein belongs to the IPP transferase family. In terms of assembly, monomer. It depends on Mg(2+) as a cofactor.

It carries out the reaction adenosine(37) in tRNA + dimethylallyl diphosphate = N(6)-dimethylallyladenosine(37) in tRNA + diphosphate. Functionally, catalyzes the transfer of a dimethylallyl group onto the adenine at position 37 in tRNAs that read codons beginning with uridine, leading to the formation of N6-(dimethylallyl)adenosine (i(6)A). The chain is tRNA dimethylallyltransferase from Synechococcus sp. (strain ATCC 27144 / PCC 6301 / SAUG 1402/1) (Anacystis nidulans).